The sequence spans 227 residues: MIHHIPNVLTKQQVAEFRALMDTAQWVNGKVTAGTLSASVKHNQQLSEQDPLTHHLSDLVIQAIWNNPAFQTAALPHHIIPPLFNRYDEHESFGFHVDNSIRLIRGTSQQMRTDLSCTLFLSEPEEYDGGDLVIEDTYGYHEVKLPAGDLVLYPSTSLHEVSSITRGSRFASFFWVQSLVRDDTKRHLLFNLDETVRSLRIQHGDGYPEVVKLTNIYHNLIRMWSEV.

Residues 78-178 enclose the Fe2OG dioxygenase domain; the sequence is HIIPPLFNRY…RFASFFWVQS (101 aa). The Fe cation site is built by His-96, Asp-98, and His-159. Arg-169 is a 2-oxoglutarate binding site.

Requires Fe(2+) as cofactor. The cofactor is L-ascorbate.

The protein is PKHD-type hydroxylase ACIAD0531 of Acinetobacter baylyi (strain ATCC 33305 / BD413 / ADP1).